The primary structure comprises 283 residues: IGQALALLLKNQLPSGSELSLYDIAPVTPGVAVDLSHIPTAVKIKGFSGEDVTPALEGADVVLISAGVARKPGMDRSDLFNVNAGIVKNLVQQIAKTCPKACVGIITNPVNTTVAIAAEVLKKAGVYDKNKLFGVTTLDIIRSNTFVAELKGKLPTEVEVPVIGGHSGVTILPLLSQIPGVSFTEQEAAELTKRIQNAGTEVVEAKAGGGSATLSMGQAAARFGLSLVRALQGEKDVVECAYVEGDGQYARFFSQPLLLGKNGVEERKSIGTLSAFEQHSLDA.

Residues 1–2 and Asp-23 contribute to the NAD(+) site; that span reads IG. Positions 70 and 76 each coordinate substrate. NAD(+) contacts are provided by residues Asn-83 and 106-108; that span reads ITN. Substrate-binding residues include Asn-108 and Arg-142. Residue His-166 is the Proton acceptor of the active site. Met-216 contributes to the NAD(+) binding site.

Belongs to the LDH/MDH superfamily. MDH type 1 family. In terms of assembly, homodimer.

It catalyses the reaction (S)-malate + NAD(+) = oxaloacetate + NADH + H(+). Functionally, catalyzes the reversible oxidation of malate to oxaloacetate. This chain is Malate dehydrogenase (mdh), found in Salmonella muenchen.